The primary structure comprises 315 residues: Diacylglycerol kinase (315 aa).

The DAGKc domain maps to 1–132 (MRKRARIIYN…VDIGKMNNRY (132 aa)). ATP contacts are provided by residues 10–14 (NPTSG), T41, 67–73 (GDGTLNE), and T94. Mg(2+) contacts are provided by K213, D216, and Y218. E273 (proton acceptor) is an active-site residue.

The protein belongs to the diacylglycerol/lipid kinase family. In terms of assembly, homodimer. Mg(2+) serves as cofactor.

The catalysed reaction is a 1,2-diacyl-sn-glycerol + ATP = a 1,2-diacyl-sn-glycero-3-phosphate + ADP + H(+). Its function is as follows. Catalyzes the phosphorylation of diacylglycerol (DAG) into phosphatidic acid. Is a key enzyme involved in the production of lipoteichoic acid by reintroducing DAG formed from the breakdown of membrane phospholipids into the phosphatidylglycerol biosynthetic pathway. The chain is Diacylglycerol kinase (dagK) from Staphylococcus aureus (strain bovine RF122 / ET3-1).